A 479-amino-acid polypeptide reads, in one-letter code: Monodehydroascorbate reductase 1, peroxisomal (479 aa).

Residues 1 to 3 (MGR) lie on the Cytoplasmic side of the membrane. Residues 4-24 (AFEYVILGGGVAAGYAALEFV) form a helical membrane-spanning segment. FAD-binding positions include 12–15 (GGVA), E41, R48, K53, and 147–148 (RN). Topologically, residues 25–445 (RRNGGASSQE…QATGGGGKPT (421 aa)) are peroxisomal. NAD(+) contacts are provided by residues 172-178 (GGYIGME), R202, and G260. NADP(+)-binding positions include 174-178 (YIGME), R202, and G260. D297 is an FAD binding site. 314–315 (EH) is an NAD(+) binding site. 314–315 (EH) serves as a coordination point for NADP(+). V316 is an FAD binding site. Residue R320 coordinates L-ascorbate. Y347 lines the FAD pocket. Y347 contributes to the NAD(+) binding site. Y347 serves as a coordination point for NADP(+). R349 provides a ligand contact to L-ascorbate. Residues 446–466 (CAWHATVGVAAAVSIAAFACW) form a helical membrane-spanning segment. At 467–479 (YGWQAPYVLKRDF) the chain is on the cytoplasmic side.

Belongs to the FAD-dependent oxidoreductase family. FAD is required as a cofactor.

It is found in the peroxisome membrane. It catalyses the reaction 2 monodehydro-L-ascorbate radical + NADH + H(+) = 2 L-ascorbate + NAD(+). Catalyzes the conversion of monodehydroascorbate to ascorbate, oxidizing NADH in the process. Ascorbate is a major antioxidant against reactive oxygen species (ROS) and nitric oxide (NO). In Oryza sativa subsp. japonica (Rice), this protein is Monodehydroascorbate reductase 1, peroxisomal.